A 417-amino-acid polypeptide reads, in one-letter code: Probable secreted beta-glucosidase PSU1 (417 aa).

The signal sequence occupies residues 1-18 (MRFFETLALALLTTGALA).

This sequence belongs to the SUN family.

The protein localises to the secreted. Its subcellular location is the cell wall. Its function is as follows. Involved in cell wall synthesis. May be required for the activation of 1,3-beta-glucan synthase. The protein is Probable secreted beta-glucosidase PSU1 (psu1) of Schizosaccharomyces pombe (strain 972 / ATCC 24843) (Fission yeast).